Reading from the N-terminus, the 143-residue chain is Large ribosomal subunit protein uL13 (143 aa).

The protein belongs to the universal ribosomal protein uL13 family. Part of the 50S ribosomal subunit.

This protein is one of the early assembly proteins of the 50S ribosomal subunit, although it is not seen to bind rRNA by itself. It is important during the early stages of 50S assembly. This is Large ribosomal subunit protein uL13 from Variovorax paradoxus (strain S110).